Here is a 147-residue protein sequence, read N- to C-terminus: Angiogenin (147 aa).

The N-terminal stretch at M1–A24 is a signal peptide. A Pyrrolidone carboxylic acid modification is found at Q25. H37 serves as the catalytic Proton acceptor. R45 and D46 together coordinate tRNA. Cystine bridges form between C50-C105, C63-C116, and C81-C131. The Nucleolar localization signal motif lies at R55–L59. Positions 105 and 127 each coordinate tRNA. Catalysis depends on H138, which acts as the Proton donor.

It belongs to the pancreatic ribonuclease family. Homodimer. Interacts with RNH1; inhibiting ANG ribonuclease activity. Interacts with PCNA.

The protein resides in the secreted. The protein localises to the nucleus. It is found in the nucleolus. Its subcellular location is the cytoplasm. It localises to the stress granule. With respect to regulation, has weak tRNA ribonuclease activity by itself due to partial autoinhibition by its C-terminus, which folds into a short alpha-helix that partially occludes the substrate-binding site. In absence of stress, the ribonuclease activity is inhibited by RNH1 in the cytoplasm. In response to stress, dissociates from RNH1 in the cytoplasm and associates with cytoplasmic ribosomes with vacant A-sites: ribosomes directly activate the tRNA ribonuclease activity of ANG by refolding the C-terminal alpha-helix. In response to stress, the angiogenic activity of ANG is inhibited by RNH1 in the nucleus. In terms of biological role, secreted ribonuclease that can either promote or restrict cell proliferation of target cells, depending on the context. Endocytosed in target cells via its receptor PLXNB2 and translocates to the cytoplasm or nucleus. Under stress conditions, localizes to the cytoplasm and promotes the assembly of stress granules (SGs): specifically cleaves a subset of tRNAs within anticodon loops to produce tRNA-derived stress-induced fragments (tiRNAs), resulting in translation repression and inhibition of cell proliferation. tiRNas also prevent formation of apoptosome, thereby promoting cell survival. Preferentially cleaves RNAs between a pyrimidine and an adenosine residue, suggesting that it cleaves the anticodon loop of tRNA(Ala) (32-UUAGCAU-38) after positions 33 and 36. Cleaves a subset of tRNAs, including tRNA(Ala), tRNA(Glu), tRNA(Gly), tRNA(Lys), tRNA(Val), tRNA(His), tRNA(Asp) and tRNA(Sec). Under growth conditions and in differentiated cells, translocates to the nucleus and stimulates ribosomal RNA (rRNA) transcription, including that containing the initiation site sequences of 45S rRNA, thereby promoting cell growth and proliferation. Angiogenin induces vascularization of normal and malignant tissues via its ability to promote rRNA transcription. Involved in hematopoietic stem and progenitor cell (HSPC) growth and survival by promoting rRNA transcription in growth conditions and inhibiting translation in response to stress, respectively. Mediates the crosstalk between myeloid and intestinal epithelial cells to protect the intestinal epithelial barrier integrity: secreted by myeloid cells and promotes intestinal epithelial cells proliferation and survival. Also mediates osteoclast-endothelial cell crosstalk in growing bone: produced by osteoclasts and protects the neighboring vascular cells against senescence by promoting rRNA transcription. The protein is Angiogenin (ANG) of Pan troglodytes (Chimpanzee).